Reading from the N-terminus, the 308-residue chain is uncharacterized protein (308 aa).

A disordered region spans residues 158–221 (GDSNAETFEE…DSINHGESSE (64 aa)). Positions 206-221 (RNGDRSDSINHGESSE) are enriched in basic and acidic residues.

This is an uncharacterized protein from Arabidopsis thaliana (Mouse-ear cress).